The following is a 75-amino-acid chain: Endogenous retrovirus group K member 7 Np9 protein (75 aa).

The interval 24 to 43 (PKRQRPSRTGHDDDGGFVEK) is disordered. Residues 32 to 43 (TGHDDDGGFVEK) are compositionally biased toward basic and acidic residues.

The protein localises to the nucleus. Functionally, may possess a function in tumorigenesis. The polypeptide is Endogenous retrovirus group K member 7 Np9 protein (ERVK-7) (Homo sapiens (Human)).